The chain runs to 245 residues: tRNA (guanine-N(1)-)-methyltransferase (245 aa).

S-adenosyl-L-methionine is bound at residue Gly114.

Belongs to the RNA methyltransferase TrmD family. Homodimer.

The protein resides in the cytoplasm. The catalysed reaction is guanosine(37) in tRNA + S-adenosyl-L-methionine = N(1)-methylguanosine(37) in tRNA + S-adenosyl-L-homocysteine + H(+). Its function is as follows. Specifically methylates guanosine-37 in various tRNAs. This chain is tRNA (guanine-N(1)-)-methyltransferase, found in Sphingopyxis alaskensis (strain DSM 13593 / LMG 18877 / RB2256) (Sphingomonas alaskensis).